The primary structure comprises 392 residues: Succinate--CoA ligase [ADP-forming] subunit beta (392 aa).

The 239-residue stretch at 9-247 folds into the ATP-grasp domain; sequence KEILRVCGVP…LYEEDPKEIE (239 aa). Residues Lys-49, 56-58, Glu-102, Gln-105, and Glu-110 each bind ATP; that span reads GRG. Mg(2+) contacts are provided by Asn-202 and Asp-216. Residues Asn-267 and 324 to 326 each bind substrate; that span reads GIM.

Belongs to the succinate/malate CoA ligase beta subunit family. Heterotetramer of two alpha and two beta subunits. It depends on Mg(2+) as a cofactor.

The enzyme catalyses succinate + ATP + CoA = succinyl-CoA + ADP + phosphate. The catalysed reaction is GTP + succinate + CoA = succinyl-CoA + GDP + phosphate. It functions in the pathway carbohydrate metabolism; tricarboxylic acid cycle; succinate from succinyl-CoA (ligase route): step 1/1. In terms of biological role, succinyl-CoA synthetase functions in the citric acid cycle (TCA), coupling the hydrolysis of succinyl-CoA to the synthesis of either ATP or GTP and thus represents the only step of substrate-level phosphorylation in the TCA. The beta subunit provides nucleotide specificity of the enzyme and binds the substrate succinate, while the binding sites for coenzyme A and phosphate are found in the alpha subunit. The sequence is that of Succinate--CoA ligase [ADP-forming] subunit beta from Neorickettsia sennetsu (strain ATCC VR-367 / Miyayama) (Ehrlichia sennetsu).